A 586-amino-acid chain; its full sequence is U-box domain-containing protein 73 (586 aa).

Residues 21–122 (KADMSGLQRS…AAGADDGPTR (102 aa)) are disordered. A compositionally biased stretch (low complexity) spans 50–60 (RSAPTSPLRTP). The U-box domain occupies 182-258 (PIPIAHDGTL…SAWCLDHSDL (77 aa)).

It carries out the reaction S-ubiquitinyl-[E2 ubiquitin-conjugating enzyme]-L-cysteine + [acceptor protein]-L-lysine = [E2 ubiquitin-conjugating enzyme]-L-cysteine + N(6)-ubiquitinyl-[acceptor protein]-L-lysine.. It functions in the pathway protein modification; protein ubiquitination. Its function is as follows. Possesses E3 ubiquitin-protein ligase in vitro. This chain is U-box domain-containing protein 73 (PUB73), found in Oryza sativa subsp. japonica (Rice).